The primary structure comprises 238 residues: Probable transcriptional regulatory protein LACR_0237 (238 aa).

Belongs to the TACO1 family. YeeN subfamily.

The protein resides in the cytoplasm. This is Probable transcriptional regulatory protein LACR_0237 from Lactococcus lactis subsp. cremoris (strain SK11).